The following is a 232-amino-acid chain: Large ribosomal subunit protein uL1 (232 aa).

This sequence belongs to the universal ribosomal protein uL1 family. Part of the 50S ribosomal subunit.

Functionally, binds directly to 23S rRNA. The L1 stalk is quite mobile in the ribosome, and is involved in E site tRNA release. Its function is as follows. Protein L1 is also a translational repressor protein, it controls the translation of the L11 operon by binding to its mRNA. The polypeptide is Large ribosomal subunit protein uL1 (Alkaliphilus oremlandii (strain OhILAs) (Clostridium oremlandii (strain OhILAs))).